Consider the following 381-residue polypeptide: p55-v-Fos-transforming protein (381 aa).

A bZIP domain is found at 137-200 (EEKRRIRRER…EKLEFILAAH (64 aa)). Residues 139-159 (KRRIRRERNKMAAAKCRNRRR) are basic motif. The segment at 165–193 (LQAETDQLEDKKSALQTEIANLLKEKEKL) is leucine-zipper.

The protein belongs to the bZIP family. Fos subfamily.

The protein resides in the host nucleus. This Mus musculus (Mouse) protein is p55-v-Fos-transforming protein (V-FOS).